The primary structure comprises 177 residues: Large ribosomal subunit protein uL6 (177 aa).

Belongs to the universal ribosomal protein uL6 family. In terms of assembly, part of the 50S ribosomal subunit.

This protein binds to the 23S rRNA, and is important in its secondary structure. It is located near the subunit interface in the base of the L7/L12 stalk, and near the tRNA binding site of the peptidyltransferase center. The sequence is that of Large ribosomal subunit protein uL6 from Cronobacter sakazakii (strain ATCC BAA-894) (Enterobacter sakazakii).